Here is a 231-residue protein sequence, read N- to C-terminus: ATP phosphoribosyltransferase (231 aa).

The protein belongs to the ATP phosphoribosyltransferase family. Short subfamily. As to quaternary structure, heteromultimer composed of HisG and HisZ subunits.

It localises to the cytoplasm. The catalysed reaction is 1-(5-phospho-beta-D-ribosyl)-ATP + diphosphate = 5-phospho-alpha-D-ribose 1-diphosphate + ATP. It functions in the pathway amino-acid biosynthesis; L-histidine biosynthesis; L-histidine from 5-phospho-alpha-D-ribose 1-diphosphate: step 1/9. Catalyzes the condensation of ATP and 5-phosphoribose 1-diphosphate to form N'-(5'-phosphoribosyl)-ATP (PR-ATP). Has a crucial role in the pathway because the rate of histidine biosynthesis seems to be controlled primarily by regulation of HisG enzymatic activity. This is ATP phosphoribosyltransferase (hisG) from Rhizobium meliloti (strain 1021) (Ensifer meliloti).